The chain runs to 387 residues: Succinate--CoA ligase [ADP-forming] subunit beta (387 aa).

The 228-residue stretch at 9 to 236 (KELFAKHNVP…RAATDPLELK (228 aa)) folds into the ATP-grasp domain. Residues Lys-45, 52–54 (GRG), Ser-94, and Glu-99 contribute to the ATP site. Residues Asn-191 and Asp-205 each contribute to the Mg(2+) site. Residues Asn-256 and 318–320 (GIT) each bind substrate.

Belongs to the succinate/malate CoA ligase beta subunit family. As to quaternary structure, heterotetramer of two alpha and two beta subunits. It depends on Mg(2+) as a cofactor.

The enzyme catalyses succinate + ATP + CoA = succinyl-CoA + ADP + phosphate. It catalyses the reaction GTP + succinate + CoA = succinyl-CoA + GDP + phosphate. It participates in carbohydrate metabolism; tricarboxylic acid cycle; succinate from succinyl-CoA (ligase route): step 1/1. Succinyl-CoA synthetase functions in the citric acid cycle (TCA), coupling the hydrolysis of succinyl-CoA to the synthesis of either ATP or GTP and thus represents the only step of substrate-level phosphorylation in the TCA. The beta subunit provides nucleotide specificity of the enzyme and binds the substrate succinate, while the binding sites for coenzyme A and phosphate are found in the alpha subunit. This is Succinate--CoA ligase [ADP-forming] subunit beta from Mycobacterium marinum (strain ATCC BAA-535 / M).